A 342-amino-acid chain; its full sequence is tRNA dimethylallyltransferase (342 aa).

39 to 46 (GPTGSGKT) contributes to the ATP binding site. Residue 41 to 46 (TGSGKT) participates in substrate binding. An interaction with substrate tRNA region spans residues 64 to 67 (DSMQ).

Belongs to the IPP transferase family. As to quaternary structure, monomer. Mg(2+) is required as a cofactor.

It carries out the reaction adenosine(37) in tRNA + dimethylallyl diphosphate = N(6)-dimethylallyladenosine(37) in tRNA + diphosphate. Catalyzes the transfer of a dimethylallyl group onto the adenine at position 37 in tRNAs that read codons beginning with uridine, leading to the formation of N6-(dimethylallyl)adenosine (i(6)A). The polypeptide is tRNA dimethylallyltransferase (Chlamydia caviae (strain ATCC VR-813 / DSM 19441 / 03DC25 / GPIC) (Chlamydophila caviae)).